A 181-amino-acid chain; its full sequence is Large ribosomal subunit protein uL6 (181 aa).

This sequence belongs to the universal ribosomal protein uL6 family. As to quaternary structure, part of the 50S ribosomal subunit.

This protein binds to the 23S rRNA, and is important in its secondary structure. It is located near the subunit interface in the base of the L7/L12 stalk, and near the tRNA binding site of the peptidyltransferase center. This Desulforudis audaxviator (strain MP104C) protein is Large ribosomal subunit protein uL6.